The following is a 335-amino-acid chain: Nucleoid-associated protein PSEEN4449 (335 aa).

The protein belongs to the YejK family.

It is found in the cytoplasm. The protein resides in the nucleoid. In Pseudomonas entomophila (strain L48), this protein is Nucleoid-associated protein PSEEN4449.